Reading from the N-terminus, the 224-residue chain is UPF0758 protein PSPPH_0210 (224 aa).

Residues 102–224 enclose the MPN domain; it reads ALENPTQVRN…PLSMVERGLM (123 aa). Positions 173, 175, and 186 each coordinate Zn(2+). A JAMM motif motif is present at residues 173 to 186; the sequence is HNHPSGITTPSRSD.

This sequence belongs to the UPF0758 family.

The chain is UPF0758 protein PSPPH_0210 from Pseudomonas savastanoi pv. phaseolicola (strain 1448A / Race 6) (Pseudomonas syringae pv. phaseolicola (strain 1448A / Race 6)).